The sequence spans 270 residues: UPF0354 protein BCAH187_A4826 (270 aa).

The protein belongs to the UPF0354 family.

The chain is UPF0354 protein BCAH187_A4826 from Bacillus cereus (strain AH187).